The chain runs to 166 residues: Cytochrome b (166 aa).

The next 4 helical transmembrane spans lie at 15-35 (FKDIVGFIVMIFLLISLVLIN), 77-97 (LGGVIALVLSIAILMILPFYN), 109-129 (INQILFWIMLVTVILLTWIGA), and 136-156 (YVLLGQILTVIYFLYYLINPL).

The protein belongs to the cytochrome b family. As to quaternary structure, the main subunits of complex b-c1 are: cytochrome b, cytochrome c1 and the Rieske protein. Requires heme as cofactor.

The protein localises to the mitochondrion inner membrane. Component of the ubiquinol-cytochrome c reductase complex (complex III or cytochrome b-c1 complex) that is part of the mitochondrial respiratory chain. The b-c1 complex mediates electron transfer from ubiquinol to cytochrome c. Contributes to the generation of a proton gradient across the mitochondrial membrane that is then used for ATP synthesis. This is Cytochrome b (mt:Cyt-b) from Drosophila subobscura (Fruit fly).